We begin with the raw amino-acid sequence, 701 residues long: Pseudouridylate synthase PUS7L (701 aa).

Ser-79 is modified (phosphoserine). Asp-339 functions as the Nucleophile in the catalytic mechanism. The TRUD domain occupies 424-647 (GFVNYYGPQR…PGCYRQILKH (224 aa)).

This sequence belongs to the pseudouridine synthase TruD family.

The enzyme catalyses a uridine in mRNA = a pseudouridine in mRNA. Pseudouridine synthase that catalyzes pseudouridylation of mRNAs. This Homo sapiens (Human) protein is Pseudouridylate synthase PUS7L.